The primary structure comprises 923 residues: Protocadherin gamma-B5 (923 aa).

The first 30 residues, 1-30, serve as a signal peptide directing secretion; the sequence is MGRGTGELGRAERLPVLFLFLLSLFCPALC. Cadherin domains follow at residues 31-133, 134-242, 243-343, 344-448, 449-558, and 566-671; these read EQIR…TPKF, TQNS…PPVF, NRDV…SPEV, TFHS…APVF, HQAS…APRV, and DGSA…LPDI. Residues 31–687 lie on the Extracellular side of the membrane; it reads EQIRYRIPEE…SDPQAELQFY (657 aa). N415 and N541 each carry an N-linked (GlcNAc...) asparagine glycan. A helical transmembrane segment spans residues 688-708; sequence LVVALALISVLFLLAVILAIA. Residues 709 to 923 lie on the Cytoplasmic side of the membrane; that stretch reads LRLRRSSSPA…KKKSGKKEKK (215 aa). Disordered stretches follow at residues 794 to 832 and 893 to 923; these read TSHPELQAPPNTDWRFSQAQRPGTSGSQNGDDTGTWPNN and ATLTNAAGKRDGKAPAGGNGNKKKSGKKEKK. A compositionally biased stretch (polar residues) spans 807–832; sequence WRFSQAQRPGTSGSQNGDDTGTWPNN. Residues 913–923 show a composition bias toward basic residues; it reads NKKKSGKKEKK.

The protein resides in the cell membrane. Its function is as follows. Potential calcium-dependent cell-adhesion protein. May be involved in the establishment and maintenance of specific neuronal connections in the brain. This is Protocadherin gamma-B5 (PCDHGB5) from Pan troglodytes (Chimpanzee).